The following is a 466-amino-acid chain: Ribulose bisphosphate carboxylase large chain (466 aa).

The residue at position 5 (Lys5) is an N6,N6,N6-trimethyllysine. Substrate contacts are provided by Asn114 and Thr164. The active-site Proton acceptor is the Lys166. Lys168 is a binding site for substrate. Positions 192, 194, and 195 each coordinate Mg(2+). The residue at position 192 (Lys192) is an N6-carboxylysine. His285 serves as the catalytic Proton acceptor. Arg286, His318, and Ser370 together coordinate substrate.

Belongs to the RuBisCO large chain family. Type I subfamily. Heterohexadecamer of 8 large chains and 8 small chains; disulfide-linked. The disulfide link is formed within the large subunit homodimers. Requires Mg(2+) as cofactor. Post-translationally, the disulfide bond which can form in the large chain dimeric partners within the hexadecamer appears to be associated with oxidative stress and protein turnover.

It is found in the plastid. Its subcellular location is the chloroplast. The catalysed reaction is 2 (2R)-3-phosphoglycerate + 2 H(+) = D-ribulose 1,5-bisphosphate + CO2 + H2O. It catalyses the reaction D-ribulose 1,5-bisphosphate + O2 = 2-phosphoglycolate + (2R)-3-phosphoglycerate + 2 H(+). Its function is as follows. RuBisCO catalyzes two reactions: the carboxylation of D-ribulose 1,5-bisphosphate, the primary event in carbon dioxide fixation, as well as the oxidative fragmentation of the pentose substrate in the photorespiration process. Both reactions occur simultaneously and in competition at the same active site. This Silene gallica (Common catchfly) protein is Ribulose bisphosphate carboxylase large chain.